The primary structure comprises 127 residues: Anti-adapter protein IraD (127 aa).

Belongs to the GpW/Gp25 family. IraD subfamily. As to quaternary structure, interacts with RssB.

The protein resides in the cytoplasm. Its function is as follows. Inhibits RpoS proteolysis by regulating RssB activity, thereby increasing the stability of the sigma stress factor RpoS during oxidative stress. Its effect on RpoS stability is due to its interaction with RssB, which probably blocks the interaction of RssB with RpoS, and the consequent delivery of the RssB-RpoS complex to the ClpXP protein degradation pathway. The polypeptide is Anti-adapter protein IraD (Escherichia coli (strain UTI89 / UPEC)).